Consider the following 344-residue polypeptide: Sulfate/thiosulfate import ATP-binding protein CysA (344 aa).

One can recognise an ABC transporter domain in the interval Ile-9 to Ile-239. An ATP-binding site is contributed by Gly-41–Ser-48.

Belongs to the ABC transporter superfamily. Sulfate/tungstate importer (TC 3.A.1.6) family. The complex is composed of two ATP-binding proteins (CysA), two transmembrane proteins (CysT and CysW) and a solute-binding protein (CysP).

Its subcellular location is the cell inner membrane. It catalyses the reaction sulfate(out) + ATP + H2O = sulfate(in) + ADP + phosphate + H(+). It carries out the reaction thiosulfate(out) + ATP + H2O = thiosulfate(in) + ADP + phosphate + H(+). Part of the ABC transporter complex CysAWTP involved in sulfate/thiosulfate import. Responsible for energy coupling to the transport system. This chain is Sulfate/thiosulfate import ATP-binding protein CysA, found in Synechococcus elongatus (strain ATCC 33912 / PCC 7942 / FACHB-805) (Anacystis nidulans R2).